A 548-amino-acid polypeptide reads, in one-letter code: MTTTPIANHPNIFTHQSSSSPLAFLNRTSFIPFSSISKRNSVNCNGWRTRCSVAKDYTVPSSAVDGGPAAELDCVIVGAGISGLCIAQVMSANYPNLMVTEARDRAGGNITTVERDGYLWEEGPNSFQPSDPMLTMAVDCGLKDDLVLGDPNAPRFVLWKGKLRPVPSKLTDLAFFDLMSIPGKLRAGFGAIGLRPSPPGHEESVEQFVRRNLGGEVFERLIEPFCSGVYAGDPSKLSMKAAFGKVWKLEETGGSIIGGTFKAIKERSSTPKAPRDPRLPKPKGQTVGSFRKGLRMLPDAISARLGSKLKLSWKLSSITKSEKGGYHLTYETPEGVVSLQSRSIVMTVPSYVASNILRPLSVAAADALSNFYYPPVGAVTITYPQEAIRDERLVDGELKGFGQLHPRTQGVETLGTIYSSSLFPNRAPKGRVLLLNYIGGAKNPEILSKTESQLVEVVDRDLRKMLIKPKAQDPLVVGVRVWPQAIPQFLVGHLDTLSTAKAAMNDNGLEGLFLGGNYVSGVALGRCVEGAYEVASEVTGFLSRYAYK.

Residues 1–50 (MTTTPIANHPNIFTHQSSSSPLAFLNRTSFIPFSSISKRNSVNCNGWRTR) constitute a chloroplast transit peptide. Residues 78 to 83 (GAGISG), 101 to 102 (EA), and 123 to 126 (GPNS) each bind FAD. Positions 265-279 (KERSSTPKAPRDPRL) are enriched in basic and acidic residues. The disordered stretch occupies residues 265-287 (KERSSTPKAPRDPRLPKPKGQTV). 522-524 (VAL) contributes to the FAD binding site.

The protein belongs to the protoporphyrinogen/coproporphyrinogen oxidase family. Protoporphyrinogen oxidase subfamily. In terms of assembly, homodimer. FAD serves as cofactor.

Its subcellular location is the plastid. It localises to the chloroplast. The catalysed reaction is protoporphyrinogen IX + 3 O2 = protoporphyrin IX + 3 H2O2. It functions in the pathway porphyrin-containing compound metabolism; protoporphyrin-IX biosynthesis; protoporphyrin-IX from protoporphyrinogen-IX: step 1/1. It participates in porphyrin-containing compound metabolism; chlorophyll biosynthesis. In terms of biological role, catalyzes the 6-electron oxidation of protoporphyrinogen-IX to form protoporphyrin-IX. The sequence is that of Protoporphyrinogen oxidase, chloroplastic (PPXI) from Nicotiana tabacum (Common tobacco).